We begin with the raw amino-acid sequence, 479 residues long: Kynurenine 3-monooxygenase (479 aa).

FAD is bound by residues valine 19, 37–40 (YEAR), and alanine 57. Residues arginine 85 and tyrosine 99 each coordinate L-kynurenine. FAD contacts are provided by residues arginine 111, leucine 136, threonine 172, aspartate 304, and 317–318 (MN). Residues asparagine 363 and tyrosine 398 each coordinate L-kynurenine. 2 helical membrane passes run 385 to 404 (FLHA…VAFT) and 425 to 445 (GLFV…VHHL).

The protein belongs to the aromatic-ring hydroxylase family. KMO subfamily. The cofactor is FAD. In terms of tissue distribution, expressed by organs containing secondary lymphoid tissue, such as the lung, spleen, mesenteric lymph node, thymus and peripheral lymph nodes.

It localises to the mitochondrion outer membrane. It carries out the reaction L-kynurenine + NADPH + O2 + H(+) = 3-hydroxy-L-kynurenine + NADP(+) + H2O. It functions in the pathway cofactor biosynthesis; NAD(+) biosynthesis; quinolinate from L-kynurenine: step 1/3. Its function is as follows. Catalyzes the hydroxylation of L-kynurenine (L-Kyn) to form 3-hydroxy-L-kynurenine (L-3OHKyn). Required for synthesis of quinolinic acid, a neurotoxic NMDA receptor antagonist and potential endogenous inhibitor of NMDA receptor signaling in axonal targeting, synaptogenesis and apoptosis during brain development. Quinolinic acid may also affect NMDA receptor signaling in pancreatic beta cells, osteoblasts, myocardial cells, and the gastrointestinal tract. In Mus musculus (Mouse), this protein is Kynurenine 3-monooxygenase.